Reading from the N-terminus, the 377-residue chain is Molybdenum import ATP-binding protein ModC (377 aa).

Positions 17-254 constitute an ABC transporter domain; the sequence is ITGDEAIRAR…LDLPFAHDED (238 aa). 52–59 contributes to the ATP binding site; that stretch reads GHSGSGKT. Positions 313 to 377 constitute a Mop domain; that stretch reads DSSILNVLPA…AQVKGVALLR (65 aa).

Belongs to the ABC transporter superfamily. Molybdate importer (TC 3.A.1.8) family. As to quaternary structure, the complex is composed of two ATP-binding proteins (ModC), two transmembrane proteins (ModB) and a solute-binding protein (ModA).

The protein resides in the cell inner membrane. The catalysed reaction is molybdate(out) + ATP + H2O = molybdate(in) + ADP + phosphate + H(+). In terms of biological role, part of the ABC transporter complex ModABC involved in molybdenum import. Responsible for energy coupling to the transport system. The protein is Molybdenum import ATP-binding protein ModC of Aromatoleum aromaticum (strain DSM 19018 / LMG 30748 / EbN1) (Azoarcus sp. (strain EbN1)).